A 389-amino-acid polypeptide reads, in one-letter code: Alpha-2B adrenergic receptor (389 aa).

Residues 1 to 25 (AIAAVITFLILFTIFGNALVILAVL) form a helical membrane-spanning segment. The Cytoplasmic segment spans residues 26–36 (TSRSLRAPQNL). Residues 37 to 62 (FLVSLAAADILVATLIIPFSLANELL) form a helical membrane-spanning segment. Topologically, residues 63–72 (GYWYFWRTWC) are extracellular. Residues C72 and C151 are joined by a disulfide bond. Residues 73–95 (EVYLALDVLFCTSSIVHLCAISL) form a helical membrane-spanning segment. Residues 96–117 (DRYWAVSRALEYNSKRTPRRIK) are Cytoplasmic-facing. Residues 118–140 (CIILTVWLIAAAISLPPLIYKGD) traverse the membrane as a helical segment. The Extracellular portion of the chain corresponds to 141–156 (QGPQPRGRPQCMLNQE). Residues 157 to 180 (AWYILSSSIGSFFAPCLIMILVYL) traverse the membrane as a helical segment. Residues 181–353 (RIYLIAKRSN…LTREKRFTFV (173 aa)) lie on the Cytoplasmic side of the membrane. 2 disordered regions span residues 192-218 (RGPR…PLAL) and 231-310 (DGEA…HLQQ). A compositionally biased stretch (basic and acidic residues) spans 234-249 (ANGHSKLTGEKERETS). The chain crosses the membrane as a helical span at residues 354–377 (LTVVIGVFVLCWFPFFFSYSLGAI). At 378–386 (CPQHCKVPH) the chain is on the extracellular side. The chain crosses the membrane as a helical span at residues 387-389 (GLF).

This sequence belongs to the G-protein coupled receptor 1 family. Adrenergic receptor subfamily. ADRA2B sub-subfamily. In terms of assembly, interacts with RAB26. Interacts with PPP1R9B.

Its subcellular location is the cell membrane. In terms of biological role, alpha-2 adrenergic receptors mediate the catecholamine-induced inhibition of adenylate cyclase through the action of G proteins. The protein is Alpha-2B adrenergic receptor (ADRA2B) of Procavia capensis habessinica (Abyssinian hyrax).